We begin with the raw amino-acid sequence, 165 residues long: Cyclic pyranopterin monophosphate synthase (165 aa).

Residues 76–78 (LCH) and 114–115 (ME) each bind substrate. Residue Asp129 is part of the active site.

Belongs to the MoaC family. Homohexamer; trimer of dimers.

The catalysed reaction is (8S)-3',8-cyclo-7,8-dihydroguanosine 5'-triphosphate = cyclic pyranopterin phosphate + diphosphate. The protein operates within cofactor biosynthesis; molybdopterin biosynthesis. Its function is as follows. Catalyzes the conversion of (8S)-3',8-cyclo-7,8-dihydroguanosine 5'-triphosphate to cyclic pyranopterin monophosphate (cPMP). In Brucella canis (strain ATCC 23365 / NCTC 10854 / RM-666), this protein is Cyclic pyranopterin monophosphate synthase.